Reading from the N-terminus, the 375-residue chain is o-succinylbenzoate synthase (375 aa).

K166 acts as the Proton donor in catalysis. Residues D191, E216, and D241 each contribute to the Mg(2+) site. K265 functions as the Proton acceptor in the catalytic mechanism.

Belongs to the mandelate racemase/muconate lactonizing enzyme family. MenC type 2 subfamily. As to quaternary structure, homotetramer. A divalent metal cation serves as cofactor.

The enzyme catalyses (1R,6R)-6-hydroxy-2-succinyl-cyclohexa-2,4-diene-1-carboxylate = 2-succinylbenzoate + H2O. It carries out the reaction N-acetyl-D-methionine = N-acetyl-L-methionine. It functions in the pathway quinol/quinone metabolism; 1,4-dihydroxy-2-naphthoate biosynthesis; 1,4-dihydroxy-2-naphthoate from chorismate: step 4/7. The protein operates within quinol/quinone metabolism; menaquinone biosynthesis. Functionally, converts 2-succinyl-6-hydroxy-2,4-cyclohexadiene-1-carboxylate (SHCHC) to 2-succinylbenzoate (OSB). Also acts as a N-succinylamino acid racemase (NSAR) that catalyzes the racemization of N-succinyl-D/L-phenylalanine. Can catalyze the racemization of a broad range of N-acylamino acids, including N-acetyl-D-methionine, N-formyl-D/L-methionine, N-formyl-D/L-norleucine, N-formyl-D/L-aminobutyric acid, N-formyl-D/L-norvaline, N-formyl-D/L-homophenylalanine, N-carbamoyl-D-methionine and N-carbamoyl-D-norleucine. May be a bifunctional enzyme involved in menaquinone biosynthesis and in an irreversible pathway for the conversion of D- to L-amino acids, thereby facilitating the survival and/or growth of the organism. The chain is o-succinylbenzoate synthase from Geobacillus stearothermophilus (Bacillus stearothermophilus).